The primary structure comprises 212 residues: Ribosomal RNA small subunit methyltransferase G (212 aa).

Residues Phe78, 96–98, 124–125, and Arg141 each bind S-adenosyl-L-methionine; these read ESS and VE.

This sequence belongs to the methyltransferase superfamily. RNA methyltransferase RsmG family.

The protein resides in the cytoplasm. In terms of biological role, specifically methylates the N7 position of a guanine in 16S rRNA. In Onion yellows phytoplasma (strain OY-M), this protein is Ribosomal RNA small subunit methyltransferase G.